Consider the following 293-residue polypeptide: 5'-3' exoribonuclease Rnm (293 aa).

Mn(2+)-binding residues include histidine 13, histidine 15, aspartate 20, histidine 45, glutamate 72, histidine 83, histidine 198, aspartate 255, and histidine 257.

Belongs to the PHP family. TrpH/YciV subfamily. Requires Mn(2+) as cofactor.

It catalyses the reaction a ribonucleoside 3',5'-bisphosphate + H2O = a ribonucleoside 5'-phosphate + phosphate. Exoribonuclease that catalyzes the last steps of 5S, 16S and 23S rRNA 5'-end maturation. Removes 3 nucleotides (nt) from the 5' end of 5S, 16S and 23S rRNA precursors to generate the mature 5' ends. Precursors with longer extensions are not processed (7 nt at the 5' end of pre-23S rRNA or 66 nt at the 5'-end of 16S rRNA are not processed). 5S and 23S rRNA maturation occurs more efficiently and accurately on ribosomal particles as compared to free RNA; the enzyme overdigests free RNA but generates the correct 5'-end in ribosomes from rnm deletion strains. Efficiently catalyzes the hydrolysis of the 3'-phosphate from 3',5'-bis-phosphonucleotides as well as the successive hydrolysis of 5'-phosphomononucleotides from the 5'-end of short pieces of RNA and DNA, with no specificity toward the identity of the nucleotide base. Is more efficient at hydrolyzing RNA oligonucleotides than DNA oligonucleotides. This enzyme can also hydrolyze annealed DNA duplexes, albeit at a catalytic efficiency approximately 10-fold lower than that of the corresponding single-stranded oligonucleotides. This is 5'-3' exoribonuclease Rnm from Escherichia coli (strain K12).